Here is a 295-residue protein sequence, read N- to C-terminus: Ribosomal protein L11 methyltransferase (295 aa).

The S-adenosyl-L-methionine site is built by T150, G171, D193, and N232.

The protein belongs to the methyltransferase superfamily. PrmA family.

The protein localises to the cytoplasm. The catalysed reaction is L-lysyl-[protein] + 3 S-adenosyl-L-methionine = N(6),N(6),N(6)-trimethyl-L-lysyl-[protein] + 3 S-adenosyl-L-homocysteine + 3 H(+). Its function is as follows. Methylates ribosomal protein L11. The chain is Ribosomal protein L11 methyltransferase from Methylobacillus flagellatus (strain ATCC 51484 / DSM 6875 / VKM B-1610 / KT).